The following is a 374-amino-acid chain: 4-hydroxy-3-methylbut-2-en-1-yl diphosphate synthase (flavodoxin) (374 aa).

Residues Cys268, Cys271, Cys303, and Glu310 each contribute to the [4Fe-4S] cluster site.

The protein belongs to the IspG family. Requires [4Fe-4S] cluster as cofactor.

It carries out the reaction (2E)-4-hydroxy-3-methylbut-2-enyl diphosphate + oxidized [flavodoxin] + H2O + 2 H(+) = 2-C-methyl-D-erythritol 2,4-cyclic diphosphate + reduced [flavodoxin]. The protein operates within isoprenoid biosynthesis; isopentenyl diphosphate biosynthesis via DXP pathway; isopentenyl diphosphate from 1-deoxy-D-xylulose 5-phosphate: step 5/6. Its function is as follows. Converts 2C-methyl-D-erythritol 2,4-cyclodiphosphate (ME-2,4cPP) into 1-hydroxy-2-methyl-2-(E)-butenyl 4-diphosphate. This Geobacillus thermodenitrificans (strain NG80-2) protein is 4-hydroxy-3-methylbut-2-en-1-yl diphosphate synthase (flavodoxin).